We begin with the raw amino-acid sequence, 211 residues long: Protein-methionine-sulfoxide reductase heme-binding subunit MsrQ (211 aa).

5 helical membrane passes run 17 to 37 (LAGLLPFLWLVWAINHGGLGA), 54 to 74 (FLLATLLITPLARYVKQPLLI), 82 to 102 (LWCFAWATLHLTSYALLELGV), 116 to 136 (PYLTLGIISWVILLALAFTST), and 153 to 173 (FVYLVAILAPIHYLWSVKIIS).

Belongs to the MsrQ family. Heterodimer of a catalytic subunit (MsrP) and a heme-binding subunit (MsrQ). FMN is required as a cofactor. Requires heme b as cofactor.

Its subcellular location is the cell inner membrane. Functionally, part of the MsrPQ system that repairs oxidized periplasmic proteins containing methionine sulfoxide residues (Met-O), using respiratory chain electrons. Thus protects these proteins from oxidative-stress damage caused by reactive species of oxygen and chlorine generated by the host defense mechanisms. MsrPQ is essential for the maintenance of envelope integrity under bleach stress, rescuing a wide series of structurally unrelated periplasmic proteins from methionine oxidation, including the primary periplasmic chaperone SurA and the lipoprotein Pal. MsrQ provides electrons for reduction to the reductase catalytic subunit MsrP, using the quinone pool of the respiratory chain. This Escherichia coli (strain SMS-3-5 / SECEC) protein is Protein-methionine-sulfoxide reductase heme-binding subunit MsrQ.